Consider the following 293-residue polypeptide: MKTFLIFALLAIAATSTIAQQQPFPQQPIPQQPQPYPQQPQPYPQQPFPPQQPFPQQPVPQQPQPYPQQPFPPQQPFPQQPPFWQQKPFPQQPPFGLQQPILSQQQPCTPQQTPLPQGQLYQTLLQLQIQYVHPSILQQLNPCKVFLQQQCSPVPVPQRIARSQMLQQSSCHVLQQQCCQQLPQIPEQFRHEAIRAIVYSIFLQEQPQQLVEGVSQPQQQLWPQQVGQCSFQQPQPQQVGQQQQVPQSAFLQPHQIAQLEATTSIALRTLPMMCSVNVPLYRILRGVGPSVGV.

An N-terminal signal peptide occupies residues 1–19 (MKTFLIFALLAIAATSTIA). The disordered stretch occupies residues 20–90 (QQQPFPQQPI…PPFWQQKPFP (71 aa)). Residues 25-81 (PQQPIPQQPQPYPQQPQPYPQQPFPPQQPFPQQPVPQQPQPYPQQPFPPQQPFPQQP) show a composition bias toward pro residues.

The protein belongs to the gliadin/glutenin family. In terms of tissue distribution, developing endosperm.

Its function is as follows. Sulfur-rich seed storage protein. The chain is B1-hordein from Hordeum vulgare (Barley).